We begin with the raw amino-acid sequence, 33 residues long: Phospholipase A2 homolog BmarPLA2 (33 aa).

It belongs to the phospholipase A2 family. Group II subfamily. K49 sub-subfamily. In terms of assembly, homodimer; non-covalently linked. Expressed by the venom gland.

The protein localises to the secreted. In terms of biological role, snake phospholipase A2 homolog that lacks enzymatic activity. May display myotoxin activity. In isolated heart decreases cardiac frequency. Also decreases mean arterial pressure. Does not show antimicrobial activity. Does not change renal parameters (such as perfusion pressure, renal vascular resistance, urinary flow, glomerular filtration rate and sodium tubular transport). This chain is Phospholipase A2 homolog BmarPLA2, found in Bothrops marajoensis (Marajo lancehead).